We begin with the raw amino-acid sequence, 188 residues long: Adenine phosphoribosyltransferase (188 aa).

This sequence belongs to the purine/pyrimidine phosphoribosyltransferase family. As to quaternary structure, homodimer.

It localises to the cytoplasm. The enzyme catalyses AMP + diphosphate = 5-phospho-alpha-D-ribose 1-diphosphate + adenine. Its pathway is purine metabolism; AMP biosynthesis via salvage pathway; AMP from adenine: step 1/1. Its function is as follows. Catalyzes a salvage reaction resulting in the formation of AMP, that is energically less costly than de novo synthesis. The chain is Adenine phosphoribosyltransferase from Burkholderia lata (strain ATCC 17760 / DSM 23089 / LMG 22485 / NCIMB 9086 / R18194 / 383).